An 890-amino-acid chain; its full sequence is Bacteriocin BCN5 (890 aa).

2 SH3b domains span residues 22–84 and 179–241; these read PPNA…TNAT and ENNA…TNAT. Residues 303–549 enclose the Peptidase M14 domain; sequence GYVKYEGAAA…RYLQKIINAV (247 aa). His358, Glu361, and His475 together coordinate Zn(2+). The active-site Proton donor/acceptor is the Glu525. The SH3b 3 domain occupies 572–636; that stretch reads EATGEVINVQ…VNSGYIIILK (65 aa). Residues 815 to 869 are hydrophobic; it reads KALAAAVIVNGVETMFCAFLGGFIAQCIAPEFPIVAAVAGAIVSAIAAFAIGYFV.

The cofactor is Zn(2+).

In terms of biological role, may function as an ionophore. This Clostridium perfringens protein is Bacteriocin BCN5 (bcn).